We begin with the raw amino-acid sequence, 128 residues long: MGLWKSSPFLAFSILVLCQAGGLQAAPFRSALEGLPDPTALSEKEGRLLLAALVKAYVQRKNELEQEQEQETEGSSITAQKRSCNTATCVTHRLAGLLSRSGGVVKNNFVPTNVGSEAFGRRRRDLRA.

An N-terminal signal peptide occupies residues 1 to 25; the sequence is MGLWKSSPFLAFSILVLCQAGGLQA. A propeptide spanning residues 26–80 is cleaved from the precursor; it reads APFRSALEGLPDPTALSEKEGRLLLAALVKAYVQRKNELEQEQEQETEGSSITAQ. Positions 63–83 are disordered; the sequence is ELEQEQEQETEGSSITAQKRS. Over residues 74–83 the composition is skewed to polar residues; it reads GSSITAQKRS. Cys84 and Cys89 are joined by a disulfide. At Phe119 the chain carries Phenylalanine amide. A propeptide spanning residues 125–128 is cleaved from the precursor; that stretch reads DLRA.

Belongs to the calcitonin family.

Its subcellular location is the secreted. CGRP1/CALCA is a peptide hormone that induces vasodilation mediated by the CALCRL-RAMP1 receptor complex. Dilates a variety of vessels including the coronary, cerebral and systemic vasculature. Its abundance in the CNS also points toward a neurotransmitter or neuromodulator role. It also elevates platelet cAMP. CGRP1 can also bind and activate CALCR-RAMP1 (AMYR1) receptor complex. The sequence is that of Calcitonin gene-related peptide 1 (CALCA) from Canis lupus familiaris (Dog).